The following is a 777-amino-acid chain: Polyribonucleotide nucleotidyltransferase (777 aa).

D494 and D500 together coordinate Mg(2+). In terms of domain architecture, KH spans 561 to 620; the sequence is PRIITLQIDPSKIGALIGPGGKTIRSIIEQTGAQIDVEDDGRVFVTTPDADGARMAQSLI. The S1 motif domain maps to 630 to 699; it reads GEIFTGKVVR…GTGKLSLSRR (70 aa). The interval 703 to 777 is disordered; that stretch reads TGETAEQRKS…NDRRGGGFRG (75 aa). A compositionally biased stretch (gly residues) spans 718 to 727; the sequence is GPRGGGGGGD. Basic and acidic residues-rich tracts occupy residues 728–761 and 768–777; these read RGPR…DRGP and NDRRGGGFRG.

Belongs to the polyribonucleotide nucleotidyltransferase family. Requires Mg(2+) as cofactor.

It localises to the cytoplasm. The catalysed reaction is RNA(n+1) + phosphate = RNA(n) + a ribonucleoside 5'-diphosphate. Functionally, involved in mRNA degradation. Catalyzes the phosphorolysis of single-stranded polyribonucleotides processively in the 3'- to 5'-direction. This is Polyribonucleotide nucleotidyltransferase from Herpetosiphon aurantiacus (strain ATCC 23779 / DSM 785 / 114-95).